The primary structure comprises 268 residues: Tryptophan synthase alpha chain (268 aa).

Active-site proton acceptor residues include Glu49 and Asp60.

Belongs to the TrpA family. In terms of assembly, tetramer of two alpha and two beta chains.

It carries out the reaction (1S,2R)-1-C-(indol-3-yl)glycerol 3-phosphate + L-serine = D-glyceraldehyde 3-phosphate + L-tryptophan + H2O. It participates in amino-acid biosynthesis; L-tryptophan biosynthesis; L-tryptophan from chorismate: step 5/5. Its function is as follows. The alpha subunit is responsible for the aldol cleavage of indoleglycerol phosphate to indole and glyceraldehyde 3-phosphate. The sequence is that of Tryptophan synthase alpha chain from Escherichia coli O127:H6 (strain E2348/69 / EPEC).